The following is a 369-amino-acid chain: MRN complex-interacting protein (369 aa).

Ser115 bears the Phosphoserine mark. 3 disordered regions span residues 122–150 (GGGV…PRKR), 209–245 (PSFT…PCPA), and 282–317 (AQAE…TPMP). A Nuclear localization signal (NLS) motif is present at residues 148-151 (RKRK). Residues 221–230 (KGRESSREDL) show a composition bias toward basic and acidic residues. Residues 223–259 (RESSREDLDTMELVPRGEPPCPAQQVRTMSKWEQCLG) are necessary for the association with the MRN complex.

Belongs to the MRNIP family. As to quaternary structure, associates with the MRE11-RAD50-NBN (MRN) damage-sensing complex; this association is constitutive. Interacts with MRE11. Interacts with NBN. Interacts with RAD50. Post-translationally, phosphorylated; phosphorylation is constitutive and occurs in the absence of any DNA-damaging stimulus. Phosphorylation on Ser-115 is necessary for its nuclear retention.

It is found in the nucleus. The protein resides in the nucleoplasm. Its function is as follows. Plays a role in the cellular response to DNA damage and the maintenance of genome stability through its association with the MRN damage-sensing complex. Promotes chromatin loading and activity of the MRN complex to facilitate subsequent ATM-mediated DNA damage response signaling and DNA repair. The polypeptide is MRN complex-interacting protein (Bos taurus (Bovine)).